The sequence spans 301 residues: MTNVFHHVRNFIEQQPAPAKTLEKSSSPNILYTALPKHWRSNKSFQEPFYVVLLTPVPDNTEVSIWAGNDEKPCEEVRNEKAKVHRQVAKFNDLRFVGRSGRGRKFHLTIVIHSAPMMVATVKNVIKVTVDGPRDARIPKPQGSLKRQAEQQTIFPNDIIRTPGPPMPMTMIPPPWFPLPMTQTFPPSFFPLISPGPHPSISAALWKIHSESMKTPIKQKVEQENVSLNTSTCLSSPSIFITPTSDDRKLKRPSSPRSITKSSETSINLIQETPESVESKRRRNVSITSSNSSSPTIWRPF.

A Runt domain is found at 10-138 (NFIEQQPAPA…TVDGPRDARI (129 aa)). 3 interaction with DNA regions span residues 40-44 (RSNKS), 95-103 (RFVGRSGRG), and 128-137 (VTVDGPRDAR). Chloride contacts are provided by Arg-99 and Val-130. The tract at residues 237–301 (PSIFITPTSD…SSSPTIWRPF (65 aa)) is disordered. A Phosphoserine modification is found at Ser-255. Over residues 255-276 (SPRSITKSSETSINLIQETPES) the composition is skewed to polar residues. Residues 285-301 (VSITSSNSSSPTIWRPF) are compositionally biased toward low complexity.

As to quaternary structure, interacts with CBFbeta homolog bro-1; acts to increase the affinity and specificity of interaction of rnt-1 with DNA. Interacts with TGF-beta pathway protein sma-4. Post-translationally, may be ubiquitinated in order to be targeted for proteasome-mediated degradation in intestinal cells. In terms of processing, may be phosphorylated by members of the p38 MAP kinase pathway. In terms of tissue distribution, expressed in the intestine.

Its subcellular location is the nucleus. Functionally, transcription factor. Binds to regulatory DNA sequences in order to modulate transcription; negatively autoregulates its own expression, perhaps dependent upon CBF beta homolog bro-1. Promotes proliferation, and prevents differentiation, of seam cells, a stem cell-like lineage, acting in concert with bro-1. Required for controlling cell proliferation in the seam cells, perhaps by repressing expression of cyclin-dependent kinase inhibitor cki-1. Inhibition of seam cell differentiation is regulated by rnt-1 and bro-1, perhaps acting upstream of pop-1, by antagonizing pop-1 repressor function. Required for asymmetrical cell divisions in the lineage derived from a posterior embryonic seam cell, the T blast cell, and for asymmetric expression of zinc finger protein tlp-1. Regulates growth and male tail development. Involved in the oxidative stress response, perhaps downstream of the p38 MAP kinase pathway, and acting as part of a negative feedback loop via a transcriptional target gene, tyrosine-protein phosphatase vhp-1. Positively modulates dopaminergic signaling in a non-cell autonomous manner. May be involved in TGF-beta signaling. This is Runt-related transcription factor rnt-1 from Caenorhabditis elegans.